Consider the following 217-residue polypeptide: Probable transaldolase (217 aa).

Residue Lys-85 is the Schiff-base intermediate with substrate of the active site.

Belongs to the transaldolase family. Type 3B subfamily.

It localises to the cytoplasm. The catalysed reaction is D-sedoheptulose 7-phosphate + D-glyceraldehyde 3-phosphate = D-erythrose 4-phosphate + beta-D-fructose 6-phosphate. It participates in carbohydrate degradation; pentose phosphate pathway; D-glyceraldehyde 3-phosphate and beta-D-fructose 6-phosphate from D-ribose 5-phosphate and D-xylulose 5-phosphate (non-oxidative stage): step 2/3. Transaldolase is important for the balance of metabolites in the pentose-phosphate pathway. The sequence is that of Probable transaldolase from Brachyspira hyodysenteriae (strain ATCC 49526 / WA1).